The sequence spans 239 residues: uncharacterized protein (239 aa).

The dksA C4-type; degenerate zinc-finger motif lies at 94 to 114 (CEVSGKEIPFERLEALPTATT). Residues 133–158 (ETPFGQFEFDDDEEIRAPYDSEDSYQ) show a composition bias toward acidic residues. Positions 133 to 182 (ETPFGQFEFDDDEEIRAPYDSEDSYQDVEKYGNSQTPQDMENPPLSYDDM) are disordered.

This is an uncharacterized protein from Bacillus subtilis (strain 168).